Reading from the N-terminus, the 367-residue chain is Glutamate 5-kinase (367 aa).

An ATP-binding site is contributed by lysine 17. Substrate-binding residues include serine 57, aspartate 144, and asparagine 156. ATP is bound by residues 176–177 (SD) and 217–223 (TGGMTSK). In terms of domain architecture, PUA spans 279–357 (AGALTLDEGA…SELPGELRRP (79 aa)).

The protein belongs to the glutamate 5-kinase family.

The protein resides in the cytoplasm. The catalysed reaction is L-glutamate + ATP = L-glutamyl 5-phosphate + ADP. Its pathway is amino-acid biosynthesis; L-proline biosynthesis; L-glutamate 5-semialdehyde from L-glutamate: step 1/2. Catalyzes the transfer of a phosphate group to glutamate to form L-glutamate 5-phosphate. The polypeptide is Glutamate 5-kinase (Mycolicibacterium paratuberculosis (strain ATCC BAA-968 / K-10) (Mycobacterium paratuberculosis)).